The chain runs to 250 residues: 5'/3'-nucleotidase SurE (250 aa).

Residues Asp9, Asp10, Ser40, and Asn93 each contribute to the a divalent metal cation site.

The protein belongs to the SurE nucleotidase family. It depends on a divalent metal cation as a cofactor.

It localises to the cytoplasm. The enzyme catalyses a ribonucleoside 5'-phosphate + H2O = a ribonucleoside + phosphate. It carries out the reaction a ribonucleoside 3'-phosphate + H2O = a ribonucleoside + phosphate. It catalyses the reaction [phosphate](n) + H2O = [phosphate](n-1) + phosphate + H(+). In terms of biological role, nucleotidase with a broad substrate specificity as it can dephosphorylate various ribo- and deoxyribonucleoside 5'-monophosphates and ribonucleoside 3'-monophosphates with highest affinity to 3'-AMP. Also hydrolyzes polyphosphate (exopolyphosphatase activity) with the preference for short-chain-length substrates (P20-25). Might be involved in the regulation of dNTP and NTP pools, and in the turnover of 3'-mononucleotides produced by numerous intracellular RNases (T1, T2, and F) during the degradation of various RNAs. This Yersinia enterocolitica serotype O:8 / biotype 1B (strain NCTC 13174 / 8081) protein is 5'/3'-nucleotidase SurE.